Consider the following 472-residue polypeptide: Estrogen receptor beta (472 aa).

The interval 1–104 (MAFCSPAMMN…NPGSKRDAHF (104 aa)) is modulating. 2 consecutive NR C4-type zinc fingers follow at residues 105–125 (CAVC…CEGC) and 141–165 (CPAT…LRKC). Positions 105–170 (CAVCSDYASG…RLRKCYEVGM (66 aa)) form a DNA-binding region, nuclear receptor. Residues 217–449 (SPEQFVLTLL…DLLLEMLNAH (233 aa)) form the NR LBD domain.

Belongs to the nuclear hormone receptor family. NR3 subfamily. Binds DNA as a homodimer. Can form a heterodimer with ER-alpha. A high expression is seen in the telencephalon, diencephalon, pituitary, testis and kidneys but little or no expression is seen in the cerebellum, pectoral muscle and adrenal gland.

Its subcellular location is the nucleus. Its function is as follows. Binds estrogens with an affinity similar to that of ER-alpha, and activates expression of reporter genes containing estrogen response elements (ERE) in an estrogen-dependent manner. In Coturnix japonica (Japanese quail), this protein is Estrogen receptor beta (ESR2).